The sequence spans 535 residues: Alpha-1,3-mannosyl-glycoprotein 4-beta-N-acetylglucosaminyltransferase A (535 aa).

At 1 to 4 the chain is on the cytoplasmic side; the sequence is MRLR. Residues 5–27 traverse the membrane as a helical; Signal-anchor for type II membrane protein segment; sequence NGTVATALAFITSFLTLSWYTTW. Positions 28-63 form a coiled coil; sequence QNGKEKLIAYQREFLALKERLRIAEHRISQRSSELN. The Lumenal portion of the chain corresponds to 28-535; it reads QNGKEKLIAY…NEIHIKKATN (508 aa). N77 and N458 each carry an N-linked (GlcNAc...) asparagine glycan. The residue at position 474 (S474) is a Phosphoserine.

Belongs to the glycosyltransferase 54 family. The cofactor is a divalent metal cation. N-glycosylated.

The protein resides in the golgi apparatus membrane. The protein localises to the secreted. The enzyme catalyses N(4)-{beta-D-GlcNAc-(1-&gt;2)-alpha-D-Man-(1-&gt;3)-[beta-D-GlcNAc-(1-&gt;2)-alpha-D-Man-(1-&gt;6)]-beta-D-Man-(1-&gt;4)-beta-D-GlcNAc-(1-&gt;4)-beta-D-GlcNAc}-L-asparaginyl-[protein] + UDP-N-acetyl-alpha-D-glucosamine = N(4)-{beta-D-GlcNAc-(1-&gt;2)-[beta-D-GlcNAc-(1-&gt;4)]-alpha-D-Man-(1-&gt;3)-[beta-D-GlcNAc-(1-&gt;2)-alpha-D-Man-(1-&gt;6)]-beta-D-Man-(1-&gt;4)-beta-D-GlcNAc-(1-&gt;4)-beta-D-GlcNAc}-L-asparaginyl-[protein] + UDP + H(+). It catalyses the reaction an N(4)-{beta-D-GlcNAc-(1-&gt;2)-alpha-D-Man-(1-&gt;3)-[alpha-D-Man-(1-&gt;6)]-beta-D-Man-(1-&gt;4)-beta-D-GlcNAc-(1-&gt;4)-beta-D-GlcNAc}-L-asparaginyl-[protein] + UDP-N-acetyl-alpha-D-glucosamine = an N(4)-{beta-D-GlcNAc-(1-&gt;2)-[beta-D-GlcNAc-(1-&gt;4)]-alpha-D-Man-(1-&gt;3)-[alpha-D-Man-(1-&gt;6)]-beta-D-Man-(1-&gt;4)-beta-D-GlcNAc-(1-&gt;4)-beta-D-GlcNAc}-L-asparaginyl-[protein] + UDP + H(+). The catalysed reaction is an N(4)-{beta-D-GlcNAc-(1-&gt;2)-alpha-D-Man-(1-&gt;3)-[beta-D-GlcNAc-(1-&gt;2)-[beta-D-GlcNAc-(1-&gt;6)]-alpha-D-Man-(1-&gt;6)]-beta-D-Man-(1-&gt;4)-beta-D-GlcNAc-(1-&gt;4)-beta-D-GlcNAc}-L-asparaginyl-[protein] + UDP-N-acetyl-alpha-D-glucosamine = an N(4)-{beta-D-GlcNAc-(1-&gt;2)-[beta-D-GlcNAc-(1-&gt;4)]-alpha-D-Man-(1-&gt;3)-[beta-D-GlcNAc-(1-&gt;2)-[beta-D-GlcNAc-(1-&gt;6)]-alpha-D-Man-(1-&gt;6)]-beta-D-Man-(1-&gt;4)-beta-D-GlcNAc-(1-&gt;4)-beta-D-GlcNAc}-L-asparaginyl-[protein] + UDP + H(+). It carries out the reaction an N(4)-{beta-D-GlcNAc-(1-&gt;2)-alpha-D-Man-(1-&gt;3)-[beta-D-GlcNAc-(1-&gt;2)-alpha-D-Man-(1-&gt;6)]-beta-D-Man-(1-&gt;4)-beta-D-GlcNAc-(1-&gt;4)-[alpha-L-Fuc-(1-&gt;6)]-beta-D-GlcNAc}-L-asparaginyl-[protein] + UDP-N-acetyl-alpha-D-glucosamine = N(4)-{beta-D-GlcNAc-(1-&gt;2)-[beta-D-GlcNAc-(1-&gt;4)]-alpha-D-Man-(1-&gt;3)-[beta-D-GlcNAc-(1-&gt;2)-alpha-D-Man-(1-&gt;6)]-beta-D-Man-(1-&gt;4)-beta-D-GlcNAc-(1-&gt;4)-[alpha-L-Fuc-(1-&gt;6)]-beta-D-GlcNAc}-asparaginyl-[protein] + UDP + H(+). The enzyme catalyses an N(4)-{beta-D-GlcNAc-(1-&gt;2)-alpha-D-Man-(1-&gt;3)-[beta-D-Gal-(1-&gt;4)-beta-D-GlcNAc-(1-&gt;2)-alpha-D-Man-(1-&gt;6)]-beta-D-Man-(1-&gt;4)-beta-D-GlcNAc-(1-&gt;4)-beta-D-GlcNAc}-L-asparaginyl-[protein] + UDP-N-acetyl-alpha-D-glucosamine = an N(4)-{beta-D-GlcNAc-(1-&gt;2)-[beta-D-GlcNAc-(1-&gt;4)]-alpha-D-Man-(1-&gt;3)-[beta-D-Gal-(1-&gt;4)-beta-D-GlcNAc-(1-&gt;2)-alpha-D-Man-(1-&gt;6)]-beta-D-Man-(1-&gt;4)-beta-D-GlcNAc-(1-&gt;4)-beta-D-GlcNAc}-L-asparaginyl-[protein] + UDP + H(+). It catalyses the reaction N(4)-{beta-D-GlcNAc-(1-&gt;2)-alpha-D-Man-(1-&gt;3)-[alpha-D-Man-(1-&gt;3)-{alpha-D-Man-(1-&gt;6)}-alpha-D-Man-(1-&gt;6)]-beta-D-Man-(1-&gt;4)-beta-D-GlcNAc-(1-&gt;4)-beta-D-GlcNAc}-asparaginyl-[protein] + UDP-N-acetyl-alpha-D-glucosamine = N(4)-{beta-D-GlcNAc-(1-&gt;2)-[beta-D-GlcNAc-(1-&gt;4)]-alpha-D-Man-(1-&gt;3)-[alpha-D-Man-(1-&gt;3)-{alpha-D-Man-(1-&gt;6)}-alpha-D-Man-(1-&gt;6)]-beta-D-Man-(1-&gt;4)-beta-D-GlcNAc-(1-&gt;4)-beta-D-GlcNAc}-asparaginyl-[protein] + UDP + H(+). The catalysed reaction is N(4)-{beta-D-GlcNAc-(1-&gt;2)-alpha-D-Man-(1-&gt;3)-beta-D-Man-(1-&gt;4)-beta-D-GlcNAc-(1-&gt;4)-beta-D-GlcNAc}-asparaginyl-[protein] + UDP-N-acetyl-alpha-D-glucosamine = N(4)-{beta-D-GlcNAc-(1-&gt;2)-[beta-D-GlcNAc-(1-&gt;4)]-alpha-D-Man-(1-&gt;3)-beta-D-Man-(1-&gt;4)-beta-D-GlcNAc-(1-&gt;4)-beta-D-GlcNAc}-asparaginyl-[protein] + UDP + H(+). It participates in protein modification; protein glycosylation. Its activity is regulated as follows. Inhibited by UDP. Its function is as follows. Glycosyltransferase that catalyze the transfer of GlcNAc from UDP-GlcNAc to the GlcNAcbeta1-2Manalpha1-3 arm of the core structure of N-linked glycans through a beta1-4 linkage and participates in the production of tri- and tetra-antennary N-linked sugar chains. Involved in glucose transport by mediating SLC2A2/GLUT2 glycosylation, thereby controlling cell-surface expression of SLC2A2 in pancreatic beta cells. This is Alpha-1,3-mannosyl-glycoprotein 4-beta-N-acetylglucosaminyltransferase A from Pongo abelii (Sumatran orangutan).